A 253-amino-acid chain; its full sequence is Imidazole glycerol phosphate synthase subunit HisF (253 aa).

Catalysis depends on residues D11 and D130.

Belongs to the HisA/HisF family. As to quaternary structure, heterodimer of HisH and HisF.

Its subcellular location is the cytoplasm. The catalysed reaction is 5-[(5-phospho-1-deoxy-D-ribulos-1-ylimino)methylamino]-1-(5-phospho-beta-D-ribosyl)imidazole-4-carboxamide + L-glutamine = D-erythro-1-(imidazol-4-yl)glycerol 3-phosphate + 5-amino-1-(5-phospho-beta-D-ribosyl)imidazole-4-carboxamide + L-glutamate + H(+). Its pathway is amino-acid biosynthesis; L-histidine biosynthesis; L-histidine from 5-phospho-alpha-D-ribose 1-diphosphate: step 5/9. Its function is as follows. IGPS catalyzes the conversion of PRFAR and glutamine to IGP, AICAR and glutamate. The HisF subunit catalyzes the cyclization activity that produces IGP and AICAR from PRFAR using the ammonia provided by the HisH subunit. This Thermoanaerobacter sp. (strain X514) protein is Imidazole glycerol phosphate synthase subunit HisF.